The primary structure comprises 508 residues: Protection of telomeres protein tpz1 (508 aa).

The tract at residues 2-223 (SNCLKHPWLE…ENTTHGIYLE (222 aa)) is pot1-binding. Disordered regions lie at residues 159–178 (QEASLSQQEKPNDNTSNSRD), 235–269 (VSETPEVKQEDNDEDLDAYSWSSSTDSAGEIPSLP), and 282–358 (PPPF…QSHR). A compositionally biased stretch (polar residues) spans 327–347 (STEQLNSSLTIERSQSIQSTD). Positions 348–358 (SKQRVETQSHR) are enriched in basic and acidic residues. Residues 379–508 (TIDDSTGKLL…KKIEEFRNKS (130 aa)) are ccq1/poz1-binding.

Interacts with ccq1, pot1 and poz1.

It is found in the chromosome. It localises to the telomere. The protein localises to the nucleus. Its function is as follows. Telomeric DNA-binding protein that is required to protect the 3'-end telomeric overhang and involved in telomere length regulation. recruits poz1 and ccq1 to telomeres, regulating telomere length negatively and positively respectively. The sequence is that of Protection of telomeres protein tpz1 (tpz1) from Schizosaccharomyces pombe (strain 972 / ATCC 24843) (Fission yeast).